We begin with the raw amino-acid sequence, 650 residues long: MIDIKGIRKSYQMGDTKVDVLKGISLKIERGDFVAIMGPSGSGKSTLMHILGLLDVPSEGSYNLNGREVADLSEDELAIVRREEIGFIFQQFNLLPRMEAWQNVSLPLIYSEDGFSYDKAQALLDKVGLAERIHHKSNELSGGQQQRIAIARSLINNPRIIFADEPTGNLDSKSEKEIIQILHKLNDQGITVIVVTHEEEIGQQAKRLIRLRDGVIQSDERLQALPAAPTTAQEKRQEKTAKWPVREMIEHLHQGFQTLAANKVRSGLSMLGILIGVAAVVGMLALGTGARQSIEKQLSSLGSNLLVLRAGNVRVGGVMQESGVRIRISLDDVSTIKNQISGIKDVSPSSSGRGQITYLNKNWNTQVMGVAPAYEQMRASTPIFGRFFSEEENQRRTLVAVIGTTVARELFGEKSPIGEMIKINKVNFRVIGVLPEKGAAGPQDQDDRILVPVVTAMYRLFGRNYVDSVDIEVRDAADIPEVQDSLQELMNKRHRVPVSSQGDAFNVFNMADIQQALNSTSQTLSMLLASIAAISLVVGGIGIMNIMLVSVTERTKEIGLRKAIGARRRDILLQFLAESIVVSVCGGLLGIALGVGFSLLISKVLGWSTVVSAGSVILSFGFSALIGIVFGSYPASKASKLHPIEALRYE.

The region spanning 2 to 238 (IDIKGIRKSY…PTTAQEKRQE (237 aa)) is the ABC transporter domain. 38-45 (GPSGSGKS) contacts ATP. Helical transmembrane passes span 267-287 (GLSMLGILIGVAAVVGMLALG), 531-551 (IAAISLVVGGIGIMNIMLVSV), 580-600 (IVVSVCGGLLGIALGVGFSLL), and 610-630 (VVSAGSVILSFGFSALIGIVF).

Belongs to the ABC transporter superfamily. Macrolide exporter (TC 3.A.1.122) family. As to quaternary structure, homodimer.

It is found in the cell inner membrane. In terms of biological role, non-canonical ABC transporter that contains transmembrane domains (TMD), which form a pore in the inner membrane, and an ATP-binding domain (NBD), which is responsible for energy generation. Confers resistance against macrolides. This is Macrolide export ATP-binding/permease protein MacB from Bdellovibrio bacteriovorus (strain ATCC 15356 / DSM 50701 / NCIMB 9529 / HD100).